The primary structure comprises 37 residues: Large ribosomal subunit protein bL36 (37 aa).

It belongs to the bacterial ribosomal protein bL36 family.

In Bordetella bronchiseptica (strain ATCC BAA-588 / NCTC 13252 / RB50) (Alcaligenes bronchisepticus), this protein is Large ribosomal subunit protein bL36.